The chain runs to 141 residues: Hemoglobin subunit alpha (141 aa).

Residues 1-141 form the Globin domain; it reads VLSGDDKSNL…VSTVLTSKYR (141 aa). Residue Ser3 is modified to Phosphoserine. An N6-succinyllysine mark is found at Lys7 and Lys11. At Lys16 the chain carries N6-acetyllysine; alternate. Residue Lys16 is modified to N6-succinyllysine; alternate. Phosphotyrosine is present on Tyr24. Position 40 is an N6-succinyllysine (Lys40). Ser49 carries the post-translational modification Phosphoserine. O2 is bound at residue His58. Residue His87 participates in heme b binding. Ser102 carries the post-translational modification Phosphoserine. Thr108 bears the Phosphothreonine mark. A phosphoserine mark is found at Ser124 and Ser131. Phosphothreonine occurs at positions 134 and 137. Ser138 bears the Phosphoserine mark.

This sequence belongs to the globin family. Heterotetramer of two alpha chains and two beta chains. In terms of tissue distribution, red blood cells.

Functionally, involved in oxygen transport from the lung to the various peripheral tissues. The polypeptide is Hemoglobin subunit alpha (Microtus pennsylvanicus (Meadow vole)).